We begin with the raw amino-acid sequence, 351 residues long: Glycerol-1-phosphate dehydrogenase [NAD(P)+] (351 aa).

NAD(+) is bound by residues 97 to 101 (GKVID) and 119 to 122 (TSPS). Residue Asp-124 coordinates substrate. Ser-128 is a binding site for NAD(+). Position 171 (Asp-171) interacts with substrate. Residues Asp-171 and His-251 each coordinate Zn(2+). Substrate is bound at residue His-255. A Zn(2+)-binding site is contributed by His-267.

This sequence belongs to the glycerol-1-phosphate dehydrogenase family. As to quaternary structure, homodimer. Zn(2+) is required as a cofactor.

Its subcellular location is the cytoplasm. It catalyses the reaction sn-glycerol 1-phosphate + NAD(+) = dihydroxyacetone phosphate + NADH + H(+). The enzyme catalyses sn-glycerol 1-phosphate + NADP(+) = dihydroxyacetone phosphate + NADPH + H(+). Its pathway is membrane lipid metabolism; glycerophospholipid metabolism. In terms of biological role, catalyzes the NAD(P)H-dependent reduction of dihydroxyacetonephosphate (DHAP or glycerone phosphate) to glycerol 1-phosphate (G1P). The G1P thus generated is used as the glycerophosphate backbone of phospholipids in the cellular membranes of Archaea. This Saccharolobus islandicus (strain L.S.2.15 / Lassen #1) (Sulfolobus islandicus) protein is Glycerol-1-phosphate dehydrogenase [NAD(P)+].